Here is a 94-residue protein sequence, read N- to C-terminus: Aspartyl/glutamyl-tRNA(Asn/Gln) amidotransferase subunit C (94 aa).

Belongs to the GatC family. As to quaternary structure, heterotrimer of A, B and C subunits.

The catalysed reaction is L-glutamyl-tRNA(Gln) + L-glutamine + ATP + H2O = L-glutaminyl-tRNA(Gln) + L-glutamate + ADP + phosphate + H(+). It catalyses the reaction L-aspartyl-tRNA(Asn) + L-glutamine + ATP + H2O = L-asparaginyl-tRNA(Asn) + L-glutamate + ADP + phosphate + 2 H(+). In terms of biological role, allows the formation of correctly charged Asn-tRNA(Asn) or Gln-tRNA(Gln) through the transamidation of misacylated Asp-tRNA(Asn) or Glu-tRNA(Gln) in organisms which lack either or both of asparaginyl-tRNA or glutaminyl-tRNA synthetases. The reaction takes place in the presence of glutamine and ATP through an activated phospho-Asp-tRNA(Asn) or phospho-Glu-tRNA(Gln). The polypeptide is Aspartyl/glutamyl-tRNA(Asn/Gln) amidotransferase subunit C (Hydrogenobaculum sp. (strain Y04AAS1)).